Consider the following 199-residue polypeptide: Transmembrane protein 9B (199 aa).

Positions 1 to 34 (MASLWCGNLLRLGSGLSMSCLALSVLLLAQLTGA) are cleaved as a signal peptide. The N-linked (GlcNAc...) asparagine glycan is linked to Asn-61. The chain crosses the membrane as a helical span at residues 106-126 (IIIYLSILGLLLLYMVYLTLV). Residues Ser-143 and Ser-190 each carry the phosphoserine modification.

The protein belongs to the TMEM9 family. In terms of processing, N-glycosylated.

The protein resides in the lysosome membrane. The protein localises to the early endosome membrane. Functionally, enhances production of pro-inflammatory cytokines induced by TNF, IL1B, and TLR ligands. Has a role in TNF activation of both the NF-kappaB and MAPK pathways. The polypeptide is Transmembrane protein 9B (Tmem9b) (Mus musculus (Mouse)).